An 800-amino-acid polypeptide reads, in one-letter code: Nucleolar RNA helicase 2-B (800 aa).

The segment covering Met-1 to Ser-14 has biased composition (basic and acidic residues). The disordered stretch occupies residues Met-1–Asn-200. Residues Glu-114–Gly-124 are compositionally biased toward polar residues. Residues Gly-221–Ser-249 carry the Q motif motif. Positions Phe-252–Lys-431 constitute a Helicase ATP-binding domain. ATP is bound at residue Ala-265–Thr-272. The short motif at Asp-374–Asp-377 is the DEAD box element. One can recognise a Helicase C-terminal domain in the interval Asp-464–Asp-620. A disordered region spans residues Ile-750–Arg-800. A compositionally biased stretch (basic and acidic residues) spans Glu-752–Arg-761. The span at Arg-789–Arg-800 shows a compositional bias: basic residues.

This sequence belongs to the DEAD box helicase family. DDX21/DDX50 subfamily. In terms of tissue distribution, widely expressed. Expressed at higher level in stomach. Expressed at lower level compared to ddx21-a.

The protein resides in the nucleus. The protein localises to the nucleolus. Its subcellular location is the nucleoplasm. It localises to the cytoplasm. It is found in the cytosol. The protein resides in the mitochondrion. The enzyme catalyses ATP + H2O = ADP + phosphate + H(+). Its function is as follows. RNA helicase that acts as a sensor of the transcriptional status of both RNA polymerase (Pol) I and II: promotes ribosomal RNA (rRNA) processing and transcription from polymerase II (Pol II). Binds various RNAs, such as rRNAs, snoRNAs, 7SK and, at lower extent, mRNAs. In the nucleolus, localizes to rDNA locus, where it directly binds rRNAs and snoRNAs, and promotes rRNA transcription, processing and modification. Required for rRNA 2'-O-methylation, possibly by promoting the recruitment of late-acting snoRNAs SNORD56 and SNORD58 with pre-ribosomal complexes. In the nucleoplasm, binds 7SK RNA and is recruited to the promoters of Pol II-transcribed genes: acts by facilitating the release of P-TEFb from inhibitory 7SK snRNP in a manner that is dependent on its helicase activity, thereby promoting transcription of its target genes. Required to prevent R-loop-associated DNA damage and transcription-associated genomic instability. This Xenopus laevis (African clawed frog) protein is Nucleolar RNA helicase 2-B (ddx21-b).